A 61-amino-acid chain; its full sequence is Small ribosomal subunit protein uS14 (61 aa).

Zn(2+) is bound by residues C24, C27, C40, and C43.

It belongs to the universal ribosomal protein uS14 family. Zinc-binding uS14 subfamily. In terms of assembly, part of the 30S ribosomal subunit. Contacts proteins S3 and S10. Zn(2+) is required as a cofactor.

Binds 16S rRNA, required for the assembly of 30S particles and may also be responsible for determining the conformation of the 16S rRNA at the A site. The sequence is that of Small ribosomal subunit protein uS14 from Borrelia garinii subsp. bavariensis (strain ATCC BAA-2496 / DSM 23469 / PBi) (Borreliella bavariensis).